Consider the following 70-residue polypeptide: Large ribosomal subunit protein eL38 (70 aa).

This sequence belongs to the eukaryotic ribosomal protein eL38 family.

The sequence is that of Large ribosomal subunit protein eL38 (RpL38) from Timarcha balearica.